The sequence spans 71 residues: uncharacterized protein (71 aa).

This is an uncharacterized protein from Acheta domesticus (House cricket).